The following is a 1076-amino-acid chain: Vacuolar membrane protease (1076 aa).

The Cytoplasmic segment spans residues 1–11 (MKCYNPSAFVP). Residues 12–32 (MAVTLVTVVIYLGVFIPLLII) traverse the membrane as a helical segment. Topologically, residues 33–437 (HETVPSAPDD…TVFAVFRLRT (405 aa)) are vacuolar. Residues Asn50, Asn99, and Asn156 are each glycosylated (N-linked (GlcNAc...) asparagine). Residues His220 and Asp232 each contribute to the Zn(2+) site. The active-site Proton acceptor is Glu266. Glu267, Glu292, and His364 together coordinate Zn(2+). The helical transmembrane segment at 438-458 (LFAWSLTLLIASPLILFAVSY) threads the bilayer. Residues 459 to 491 (LLNRQEKFYFFAGSIKSKNPEDEPISLGGWRGA) are Cytoplasmic-facing. Residues 492–512 (FRFPITLFITSAITFACASLI) form a helical membrane-spanning segment. The Vacuolar portion of the chain corresponds to 513–525 (NKINPMIIYSSPY). The helical transmembrane segment at 526–546 (AVWSMSATLFFSVFWFIMAGC) threads the bilayer. At 547–556 (NFVRPSALQR) the chain is on the cytoplasmic side. A helical transmembrane segment spans residues 557–577 (GYAFMWMFVFGWILLVVATVY). Residues 578-584 (EDRFKIS) are Vacuolar-facing. The chain crosses the membrane as a helical span at residues 585–605 (GGYLFVFYEAAIFLATLIAIC). At 606 to 738 (EQFALPRKST…LPIWTWLVQY (133 aa)) the chain is on the cytoplasmic side. Disordered stretches follow at residues 619–662 (DSQN…EETV) and 701–720 (SYDG…HPYG). Residues 621–632 (QNDHSDNQDHHH) are compositionally biased toward basic and acidic residues. The span at 647-660 (PNADDEAAEEDQEE) shows a compositional bias: acidic residues. Residues 739 to 759 (LLVGPFILVILGQVGLFLVAA) form a helical membrane-spanning segment. Residues 760 to 771 (LHQTGTDGSPLF) are Vacuolar-facing. The chain crosses the membrane as a helical span at residues 772 to 792 (LPYLIVAIFSILLLLPVTPFI). Topologically, residues 793 to 799 (HRLTHHM) are cytoplasmic. A helical membrane pass occupies residues 800 to 820 (PTFFFLVFIGTLIYNLVAFPF). The Vacuolar segment spans residues 821 to 1076 (SPNNRYKAYF…LGLAFLLAYV (256 aa)). Asn912 carries N-linked (GlcNAc...) asparagine glycosylation.

The protein belongs to the peptidase M28 family. It depends on Zn(2+) as a cofactor.

Its subcellular location is the vacuole membrane. May be involved in vacuolar sorting and osmoregulation. The chain is Vacuolar membrane protease from Sclerotinia sclerotiorum (strain ATCC 18683 / 1980 / Ss-1) (White mold).